A 379-amino-acid polypeptide reads, in one-letter code: DnaJ homolog subfamily B member 14 (379 aa).

The Cytoplasmic portion of the chain corresponds to Met1–Asp244. The segment at Ser55–Lys94 is disordered. Polar residues predominate over residues Ser69–Gly84. In terms of domain architecture, J spans Asn108 to Gly172. The tract at residues Ser219–Glu241 is disordered. Residues Gly245–Leu265 traverse the membrane as a helical segment. At Ser266 to Gly379 the chain is on the lumenal side.

The protein belongs to the DnaJ family. DNAJB12/DNAJB14 subfamily. As to quaternary structure, interacts (via J domain) with HSPA8/Hsc70. Forms a multiprotein complex, at least composed of DNAJB12, DNAJB14, HSPA8/Hsc70 and SGTA; interaction with DNAJB14 and HSPA8/Hsc70 is direct.

Its subcellular location is the endoplasmic reticulum membrane. The protein localises to the nucleus membrane. In terms of biological role, acts as a co-chaperone with HSPA8/Hsc70; required to promote protein folding and trafficking, prevent aggregation of client proteins, and promote unfolded proteins to endoplasmic reticulum-associated degradation (ERAD) pathway. Acts by determining HSPA8/Hsc70's ATPase and polypeptide-binding activities. Can also act independently of HSPA8/Hsc70: together with DNAJB12, acts as a chaperone that promotes maturation of potassium channels KCND2 and KCNH2 by stabilizing nascent channel subunits and assembling them into tetramers. While stabilization of nascent channel proteins is dependent on HSPA8/Hsc70, the process of oligomerization of channel subunits is independent of HSPA8/Hsc70. When overexpressed, forms membranous structures together with DNAJB12 and HSPA8/Hsc70 within the nucleus; the role of these structures, named DJANGOs, is still unclear. (Microbial infection) In case of infection by polyomavirus, involved in the virus endoplasmic reticulum membrane penetration and infection. The sequence is that of DnaJ homolog subfamily B member 14 from Homo sapiens (Human).